The following is a 328-amino-acid chain: Biotin synthase (328 aa).

The Radical SAM core domain occupies 48–278; sequence FTGNSASLCS…GKSLSVCGGR (231 aa). 3 residues coordinate [4Fe-4S] cluster: cysteine 66, cysteine 70, and cysteine 73. Residues serine 143 and cysteine 203 each contribute to the [2Fe-2S] cluster site.

The protein belongs to the radical SAM superfamily. Biotin synthase family. In terms of assembly, homodimer. The cofactor is [4Fe-4S] cluster. It depends on [2Fe-2S] cluster as a cofactor.

It catalyses the reaction (4R,5S)-dethiobiotin + (sulfur carrier)-SH + 2 reduced [2Fe-2S]-[ferredoxin] + 2 S-adenosyl-L-methionine = (sulfur carrier)-H + biotin + 2 5'-deoxyadenosine + 2 L-methionine + 2 oxidized [2Fe-2S]-[ferredoxin]. Its pathway is cofactor biosynthesis; biotin biosynthesis; biotin from 7,8-diaminononanoate: step 2/2. Functionally, catalyzes the conversion of dethiobiotin (DTB) to biotin by the insertion of a sulfur atom into dethiobiotin via a radical-based mechanism. This chain is Biotin synthase, found in Pelobacter propionicus (strain DSM 2379 / NBRC 103807 / OttBd1).